Consider the following 230-residue polypeptide: Broad specificity amino-acid racemase YgeA (230 aa).

Substrate-binding positions include Met-10, Gln-52, and 83–85 (TNT). Catalysis depends on Thr-83, which acts as the Proton donor. Catalysis depends on Cys-197, which acts as the Proton acceptor. Residue 198-199 (TE) coordinates substrate.

Belongs to the aspartate/glutamate racemases family.

The catalysed reaction is an L-alpha-amino acid = a D-alpha-amino acid. The enzyme catalyses L-homoserine = D-homoserine. Amino-acid racemase able to utilize a broad range of substrates. Highest activity is observed with L-homoserine and D-homoserine. Has tenfold lower activity against L-methionine, L-leucine, L-valine and L-histidine. Has low activity with L-norvaline, L-asparagine, D-methionine, L-aminobutyric acid, L-isoleucine, L-serine, L-norleucine, L-alanine, L-glutamine, LL-diaminopimelic acid and L-phenylalanine. Has no activity against ten L-amino acids (Thr, Glu, Asp, Arg, Lys, Tyr, Trp, Orn, Cit and Aad). D-amino acids might be used as components of peptidoglycan and/or be involved in peptidoglycan metabolism and remodeling. In Escherichia coli (strain K12), this protein is Broad specificity amino-acid racemase YgeA (ygeA).